Here is a 142-residue protein sequence, read N- to C-terminus: Large ribosomal subunit protein uL13 (142 aa).

This sequence belongs to the universal ribosomal protein uL13 family. In terms of assembly, part of the 50S ribosomal subunit.

Functionally, this protein is one of the early assembly proteins of the 50S ribosomal subunit, although it is not seen to bind rRNA by itself. It is important during the early stages of 50S assembly. This Haemophilus influenzae (strain 86-028NP) protein is Large ribosomal subunit protein uL13.